We begin with the raw amino-acid sequence, 414 residues long: Serine/arginine-rich splicing factor SR45 (414 aa).

Disordered regions lie at residues 1-95 (MAKP…KAVQ) and 175-414 (LPPR…PRKT). Low complexity-rich tracts occupy residues 10-34 (SPSV…SRSI) and 42-60 (RSLS…GSRS). Residues 62-69 (PRRGKSPA) carry the Nuclear localization signal 1 motif. Ser77 bears the Phosphoserine mark. The RRM domain occupies 98–176 (LVLHVDSLSR…KVVKATFTLP (79 aa)). The span at 176–191 (PPRQKVSSPPKPVSAA) shows a compositional bias: low complexity. The segment covering 205–220 (DAEKDGGPRRPRETSP) has biased composition (basic and acidic residues). The interval 218–219 (TS) is required for isoform 1 function in petal development. Positions 228–243 (PRRRSPLPRRGLSPRR) are enriched in basic residues. Positions 229-236 (RRRSPLPR) match the Nuclear localization signal 2 motif. Ser256 bears the Phosphoserine mark. 3 consecutive short sequence motifs (nuclear localization signal) follow at residues 284–291 (PRRYRSPP), 318–325 (PRRLRSPP), and 338–345 (IRRPGRSR). Composition is skewed to basic residues over residues 285–343 (RRYR…RPGR) and 352–363 (RKGRGPAGRRGR). Residues 364-373 (SSSYSSSPSP) show a composition bias toward low complexity. Residues 373–380 (PRRIPRKI) carry the Nuclear localization signal 6 motif. Residues 375–394 (RIPRKISRSRSPKRPLRGKR) show a composition bias toward basic residues. Over residues 404–414 (SPPPPPPPRKT) the composition is skewed to pro residues.

This sequence belongs to the splicing factor SR family. SR45 subfamily. In terms of assembly, component of the spliceosome. Interacts with AFC2, U2AF35A, U2AF35B, RNU1, SCL33 and SKIP. The interaction with AFC2 depends on phosphorylation status. Interaction with RNU1 defines initial 5' splice sites and interaction with U2AF35B 3' splice sites in the early stage of spliceosome assembly. In terms of processing, phosphorylated by AFC2. The phosphorylation status regulates intranuclear distribution. In terms of tissue distribution, especially present in actively growing regions and dividing cells. Mostly expressed in roots (primary and secondary root meristem), shoot apical meristem (SAM), leaf primordia, pollen and inflorescence, and, to a lower extent, in leaves, vascular tissue, hydathode and fruits.

The protein resides in the nucleus speckle. The protein localises to the nucleus. It is found in the nucleoplasm. Involved in 5' and 3' splicing site selection of introns, and may bridge the 5' and 3' components of the spliceosome. Isoform 1 is required during flower petal development and isoform 2 is involved in root growth. Negatively regulates glucose and abscisic acid (ABA) signaling during early seedling development. Involved in the RNA-directed DNA methylation pathway. Modulates KIN10 stability in response to sugars, probably through the splicing regulation of 5PTASE13, a protein implicated in the proteasomal degradation of KIN10. The chain is Serine/arginine-rich splicing factor SR45 from Arabidopsis thaliana (Mouse-ear cress).